A 415-amino-acid polypeptide reads, in one-letter code: PRKCA-binding protein (415 aa).

One can recognise a PDZ domain in the interval 22-105 (KVTLQKDAQN…EVTIHYNKLQ (84 aa)). Zn(2+) is bound by residues Cys-44 and Cys-46. Thr-82 bears the Phosphothreonine mark. The AH domain maps to 144–357 (LCNDGLVKRL…CYAVLRDADV (214 aa)). The segment at 376 to 415 (EEFTDGEEEEEEEDTAAGEPARDTRGAAGPLDKGGSWCDS) is disordered. Residues 377–391 (EFTDGEEEEEEEDTA) show a composition bias toward acidic residues. Cys-413 carries the S-palmitoyl cysteine; by DHHC8 lipid modification.

In terms of assembly, monomer and homodimer. Interacts with CXADR. Interacts presynaptically with the glutamate receptors GRIA2, GRIA3, GRIK3, isoform 3 of GRIA4, isoform A of GRM4, GRM7 and GRM8; with NAPA and NAPB; and with BTG2. The interaction with NAPA and NAPB disrupts the interaction with GRIA2, conducting to the internalization of GRIA2. Interacts with PRKCA; with the amine transporters SLC6A2 and SLC6A3; with the channels ASIC1 and ASIC2; with the GTP-binding proteins ARF1 and ARF3; with the ephrin receptor tyrosine kinases EPHA7, EPHB1 and EPHB2; with ERBB2 and through its PDZ domain with the C-terminal tail of PRLHR. Interacts with UNC5A. Interacts (via AH domain) with NCS1/FREQ; in a calcium-dependent manner. Interacts with F-actin and associates with the ARP2/3 complex. Interacts (via PDZ domain) with ARF1 (activated); the interaction blocks Arp2/3 complex inhibition. Interacts with SORCS3. Phosphorylation at Thr-82 appears to inhibit the interaction with AMPA receptors. Post-translationally, palmitoylation on Cys-413 is essential for long-term synaptic depression (LTD).

The protein localises to the cytoplasm. It localises to the perinuclear region. It is found in the membrane. Its subcellular location is the postsynaptic density. The protein resides in the synapse. The protein localises to the synaptosome. It localises to the cytoskeleton. Functionally, probable adapter protein that bind to and organize the subcellular localization of a variety of membrane proteins containing some PDZ recognition sequence. Involved in the clustering of various receptors, possibly by acting at the receptor internalization level. Plays a role in synaptic plasticity by regulating the trafficking and internalization of AMPA receptors. May be regulated upon PRKCA activation. May regulate ASIC1/ASIC3 channel. Regulates actin polymerization by inhibiting the actin-nucleating activity of the Arp2/3 complex; the function is competitive with nucleation promoting factors and is linked to neuronal morphology regulation and AMPA receptor (AMPAR) endocytosis. Via interaction with the Arp2/3 complex involved in regulation of synaptic plasicity of excitatory synapses and required for spine shrinkage during long-term depression (LTD). Involved in regulation of astrocyte morphology, antagonistic to Arp2/3 complex activator WASL/N-WASP function. This is PRKCA-binding protein (PICK1) from Pongo abelii (Sumatran orangutan).